The primary structure comprises 652 residues: MSERIYPIPVDIEKNALIDQDTYQKWYQKSIEDPTSFWGEHGQRIEWFKPYTKVKNASFNDNVSIKWYEDGITNVAYNCIDRHLKDRGNEIALIWESDNPYSDKKITYNELYEHVCRFANILKNHGVKKGDRVSIYLPMIPEAAYAMLACARIGAIHSVIFAGFSSEAIAGRLIDGQSTFIITADHALRGDKTIPLKDNVDRAIHIAACQNVNVTQVMVIRRTSKIIHWVNGRDFWYHEEMPHATPDCPPEHMNAEDPLFILYTSGSTGKPKGVLHTTGGYLVYASMTHQYVFDYHPGEIYWCTADIGWITGHSYLVYGPLCNGATTLMFEGSPTFPDEGRFWEIVDKHKVNIFYTAPTAIRALMGAGDSFVKRSQRTSLRLLGTVGEPINPEAWKWFYHTVGDSRCPILDTWWQTETGGHIITPLPGATKLKAGSATHPFFGIQVQLVDPQGNILKGEAEGNLCIVDSWPGQMRTLYNNHQRFVETYFSTYKGKYFTGDGCKRDKDSYYWITGRVDDILNISGHRLGTAEIESALISHPAVSEAAVVGYPHPIKGQGIYSFVTLMAGTQPSATLHQNLIQHVRQEIGSIATLDKIQFAPHLPKTRSGKIMRRILRKIAANNFDNLGDISTLAEPQIVDNLIANRQNIEEAA.

CoA-binding positions include 189-192 (RGDK) and Thr-311. ATP-binding positions include 387–389 (GEP), 411–416 (DTWWQT), Asp-500, and Arg-515. Residue Ser-523 coordinates CoA. Arg-526 lines the ATP pocket. Mg(2+) contacts are provided by His-539 and Val-542. Arg-584 is a binding site for CoA. Lys-609 carries the post-translational modification N6-acetyllysine.

The protein belongs to the ATP-dependent AMP-binding enzyme family. It depends on Mg(2+) as a cofactor. Acetylated. Deacetylation by the SIR2-homolog deacetylase activates the enzyme.

The enzyme catalyses acetate + ATP + CoA = acetyl-CoA + AMP + diphosphate. Its function is as follows. Catalyzes the conversion of acetate into acetyl-CoA (AcCoA), an essential intermediate at the junction of anabolic and catabolic pathways. AcsA undergoes a two-step reaction. In the first half reaction, AcsA combines acetate with ATP to form acetyl-adenylate (AcAMP) intermediate. In the second half reaction, it can then transfer the acetyl group from AcAMP to the sulfhydryl group of CoA, forming the product AcCoA. This chain is Acetyl-coenzyme A synthetase, found in Bartonella bacilliformis (strain ATCC 35685 / KC583 / Herrer 020/F12,63).